A 650-amino-acid polypeptide reads, in one-letter code: Methionine--tRNA ligase (650 aa).

A 'HIGH' region motif is present at residues 11-21 (YYVNDIPHIGH). Positions 126, 129, 147, and 150 each coordinate Zn(2+). The 'KMSKS' region motif lies at 301–305 (KMSKS). Lysine 304 provides a ligand contact to ATP. Residues 513–535 (EKTEKAGEASPEKNEKEKKDAKE) form a disordered region. The tRNA-binding domain occupies 549-650 (DFKKVEIKVG…REKIAGSLIS (102 aa)).

Belongs to the class-I aminoacyl-tRNA synthetase family. MetG type 2A subfamily. In terms of assembly, homodimer. Zn(2+) is required as a cofactor.

Its subcellular location is the cytoplasm. The enzyme catalyses tRNA(Met) + L-methionine + ATP = L-methionyl-tRNA(Met) + AMP + diphosphate. Functionally, is required not only for elongation of protein synthesis but also for the initiation of all mRNA translation through initiator tRNA(fMet) aminoacylation. This Helicobacter pylori (strain ATCC 700392 / 26695) (Campylobacter pylori) protein is Methionine--tRNA ligase (metG).